A 174-amino-acid chain; its full sequence is Translation initiation factor IF-3 (174 aa).

The protein belongs to the IF-3 family. In terms of assembly, monomer.

Its subcellular location is the cytoplasm. Functionally, IF-3 binds to the 30S ribosomal subunit and shifts the equilibrium between 70S ribosomes and their 50S and 30S subunits in favor of the free subunits, thus enhancing the availability of 30S subunits on which protein synthesis initiation begins. This chain is Translation initiation factor IF-3, found in Azorhizobium caulinodans (strain ATCC 43989 / DSM 5975 / JCM 20966 / LMG 6465 / NBRC 14845 / NCIMB 13405 / ORS 571).